The primary structure comprises 580 residues: N(6)-adenosine-methyltransferase catalytic subunit METTL3 (580 aa).

The tract at residues 1-70 (MSDTWSSIQA…PKPSTTSVAP (70 aa)) is disordered. Ser-2 is modified (N-acetylserine; alternate). Ser-2 is modified (phosphoserine; alternate). Residues 28-37 (QDSGHLDLRN) show a composition bias toward basic and acidic residues. Phosphoserine occurs at positions 43, 48, and 50. Positions 55-67 (APTSSGPKPSTTS) are enriched in low complexity. Glycyl lysine isopeptide (Lys-Gly) (interchain with G-Cter in SUMO1) cross-links involve residues Lys-177, Lys-211, Lys-212, and Lys-215. Residues 198 to 217 (LASSASEPAKEPAKKSRKHA) form a disordered region. The short motif at 210–215 (AKKSRK) is the Nuclear localization signal element. Ser-219, Ser-243, and Ser-350 each carry phosphoserine. S-adenosyl-L-methionine is bound by residues 377 to 378 (DI) and Asp-395. Positions 396–410 (PPWDIHMELPYGTLT) are gate loop 1. 2 interaction with METTL14 regions span residues 450 to 454 (ERVDE) and 464 to 480 (QRII…NHGK). The segment at 462 to 479 (QLQRIIRTGRTGHWLNHG) is interphase loop. Residues 465–478 (RIIRTGRTGHWLNH) are positively charged region required for RNA-binding. Residues 507–515 (VRSTSHKPD) are gate loop 2. Residues Lys-513, 536-539 (RPHN), and 549-550 (NQ) contribute to the S-adenosyl-L-methionine site.

It belongs to the MT-A70-like family. Heterodimer; heterodimerizes with METTL14 to form an antiparallel heterodimer that constitutes an active methyltransferase. Component of the WMM complex, a N6-methyltransferase complex composed of a catalytic subcomplex, named MAC, and of an associated subcomplex, named MACOM. The MAC subcomplex is composed of METTL3 and METTL14. The MACOM subcomplex is composed of WTAP, ZC3H13, CBLL1/HAKAI, VIRMA, and, in some cases of RBM15 (RBM15 or RBM15B). Interacts with NCBP1/CBP80. Interacts with EIF4E. Interacts with EIF3B. Post-translationally, sumoylation inhibits the N6-adenosine-methyltransferase activity. Sumoylation does not affect subcellular location or interaction with METTL14. Desumoylated by SENP1. Present in both germ cells and somatic cells during testis development (at protein level).

The protein resides in the nucleus. It localises to the nucleus speckle. The protein localises to the cytoplasm. It catalyses the reaction an adenosine in mRNA + S-adenosyl-L-methionine = an N(6)-methyladenosine in mRNA + S-adenosyl-L-homocysteine + H(+). With respect to regulation, methyltransferase activity is regulated by miRNAs via a sequence pairing mechanism. Methyltransferase activity is inhibited by sumoylation. The METTL3-METTL14 heterodimer forms a N6-methyltransferase complex that methylates adenosine residues at the N(6) position of some RNAs and regulates various processes such as the circadian clock, differentiation of embryonic and hematopoietic stem cells, cortical neurogenesis, response to DNA damage, differentiation of T-cells and primary miRNA processing. In the heterodimer formed with METTL14, METTL3 constitutes the catalytic core. N6-methyladenosine (m6A), which takes place at the 5'-[AG]GAC-3' consensus sites of some mRNAs, plays a role in mRNA stability, processing, translation efficiency and editing. M6A acts as a key regulator of mRNA stability: methylation is completed upon the release of mRNA into the nucleoplasm and promotes mRNA destabilization and degradation. In embryonic stem cells (ESCs), m6A methylation of mRNAs encoding key naive pluripotency-promoting transcripts results in transcript destabilization, promoting differentiation of ESCs. M6A regulates the length of the circadian clock: acts as an early pace-setter in the circadian loop by putting mRNA production on a fast-track for facilitating nuclear processing, thereby providing an early point of control in setting the dynamics of the feedback loop. M6A also regulates circadian regulation of hepatic lipid metabolism. M6A regulates spermatogonial differentiation and meiosis and is essential for male fertility and spermatogenesis. Also required for oogenesis. Involved in the response to DNA damage: in response to ultraviolet irradiation, METTL3 rapidly catalyzes the formation of m6A on poly(A) transcripts at DNA damage sites, leading to the recruitment of POLK to DNA damage sites. M6A is also required for T-cell homeostasis and differentiation: m6A methylation of transcripts of SOCS family members (SOCS1, SOCS3 and CISH) in naive T-cells promotes mRNA destabilization and degradation, promoting T-cell differentiation. Inhibits the type I interferon response by mediating m6A methylation of IFNB. M6A also regulates cortical neurogenesis: m6A methylation of transcripts related to transcription factors, neural stem cells, the cell cycle and neuronal differentiation during brain development promotes their destabilization and decay, promoting differentiation of radial glial cells. M6A also takes place in other RNA molecules, such as primary miRNA (pri-miRNAs). Mediates m6A methylation of Xist RNA, thereby participating in random X inactivation: m6A methylation of Xist leads to target YTHDC1 reader on Xist and promote transcription repression activity of Xist. METTL3 mediates methylation of pri-miRNAs, marking them for recognition and processing by DGCR8. Acts as a positive regulator of mRNA translation independently of the methyltransferase activity: promotes translation by interacting with the translation initiation machinery in the cytoplasm. The protein is N(6)-adenosine-methyltransferase catalytic subunit METTL3 of Mus musculus (Mouse).